A 199-amino-acid polypeptide reads, in one-letter code: Recombination protein RecR (199 aa).

A C4-type zinc finger spans residues Cys-58–Cys-73. One can recognise a Toprim domain in the interval Gln-81–Pro-175.

Belongs to the RecR family.

May play a role in DNA repair. It seems to be involved in an RecBC-independent recombinational process of DNA repair. It may act with RecF and RecO. This chain is Recombination protein RecR, found in Synechococcus elongatus (strain ATCC 33912 / PCC 7942 / FACHB-805) (Anacystis nidulans R2).